The sequence spans 992 residues: Epstein-Barr nuclear antigen 6 (992 aa).

The disordered stretch occupies residues 1–70 (MESFEGQGDS…SRGDENRGWM (70 aa)). Residues 12 to 31 (QSPDNERGDNVQTTGEHDQD) are compositionally biased toward basic and acidic residues. Positions 130-159 (LILDSGLDTQHILCFVMAARQRLQDIRRGP) are interaction with host PIM1. Disordered stretches follow at residues 355-905 (ATGG…DSMA), 931-954 (PLDI…PARC), and 967-992 (DNSE…SELD). Residues 381–391 (VELESSDDELP) are compositionally biased toward acidic residues. A compositionally biased stretch (polar residues) spans 445 to 461 (AQSTPERPGPSEQSSVT). Residues 479-495 (QPPPVPKPVPVKPTPPP) are compositionally biased toward pro residues. Residues 506 to 520 (YDDDVIEVIDVETTE) are compositionally biased toward acidic residues. The stretch at 551 to 555 (PPTVS) is one 1-1; approximate repeat. The interval 551–610 (PPTVSPSDTGPPAVGPPAAGPPAAGPPAAGPPAAGPPAAGPPAAGPRILAPLSAGPPAAG) is 12 X 5 AA approximate tandem repeats of P-P-A-A-G. A 2-1; approximate repeat occupies 556–560 (PSDTG). A 3-1; approximate repeat occupies 561-565 (PPAVG). The segment covering 563-594 (AVGPPAAGPPAAGPPAAGPPAAGPPAAGPPAA) has biased composition (pro residues). Repeat copies occupy residues 566–570 (PPAAG), 571–575 (PPAAG), 576–580 (PPAAG), 581–585 (PPAAG), 586–590 (PPAAG), and 591–595 (PPAAG). The span at 595-611 (GPRILAPLSAGPPAAGP) shows a compositional bias: low complexity. The stretch at 596 to 600 (PRILA) is one 10-1; approximate repeat. One copy of the 11-1; approximate repeat lies at 601–605 (PLSAG). The 12-1 repeat unit spans residues 606 to 610 (PPAAG). 2 stretches are compositionally biased toward polar residues: residues 659–676 (TQMQ…TQPT) and 700–714 (IESS…TQPI). Residues 715–724 (SHEEQPRYED) show a composition bias toward basic and acidic residues. Low complexity-rich tracts occupy residues 738-764 (AAQP…QGYQ) and 772-781 (PYQGYQEPPA). A run of 3 repeats spans residues 741–753 (PAPQ…YQEP), 754–766 (PAPQ…YQEP), and 767–779 (PPPQ…YQEP). Residues 741 to 779 (PAPQAPYQGYQEPPAPQAPYQGYQEPPPPQAPYQGYQEP) form a 3 X 13 AA tandem repeats of P-[AP]-P-Q-A-P-Y-Q-G-Y-Q-E-P region. Polar residues predominate over residues 845–857 (DQVSQFPHLQSET). A compositionally biased stretch (low complexity) spans 859 to 881 (PPRLQLSLVPLVSSSAPSWSSPQ). Residues 882-899 (PRAPIRPIPTRFPPPPMP) show a composition bias toward pro residues.

It belongs to the herpesviridae EBNA-6 family. As to quaternary structure, interacts with host CTPB1; this interaction leads to gene repression, but also seems to interfere with the repressive function of CtBP pre-bound to DNA, leading to EBNA6 mediated up-regulation of many host genes. Interacts with host MYC; this interaction enhances MYC stability. Interacts (via N-terminus) with host RBPJ. Interacts (via N-terminus) with host histone H2AX; this interaction facilitates H2AX proteasomal degradation. Interacts with host TP73; this interaction inhibits TP73-mediated apoptotic pathway. Interacts (via N-terminus) with host PIM1; this interaction upregulates and stabilizes PIM1 and induces cell proliferation by inhibiting the growth suppressive properties of p21.

It is found in the host nucleus. Its subcellular location is the host nucleus matrix. Plays an essential role for the activation and immortalization of human B-cells. Represses transcription of viral promoters TP1 and Cp through interaction with host RBPJ, and inhibits EBNA2-mediated activation of these promoters. Targets host chromatin through interactions with host transcription factors, especially RBPJ and IRF4. Alternatively, EBNA6 also regulates the transcription of the EBV oncogene LMP1 in a cell cycle-dependent manner. Modulates the activity of several host proteins involved in cell cycle regulation including host cyclin A, MYC, RB, p21 and p27 mainly through binding to the host SCF(SKP2) complex. Inhibits the promoter of host H2AX and targets H2AX to proteasomal degradation in order to promote latency and cell proliferation. Upregulates host PIM1 expression and stabilization. Potentiates PIM1 to promote cell proliferation by inhibiting the growth suppressive properties of p21. The polypeptide is Epstein-Barr nuclear antigen 6 (EBNA6) (Epstein-Barr virus (strain B95-8) (HHV-4)).